Here is a 64-residue protein sequence, read N- to C-terminus: Large ribosomal subunit protein bL33 (64 aa).

This sequence belongs to the bacterial ribosomal protein bL33 family.

This is Large ribosomal subunit protein bL33 from Crocosphaera subtropica (strain ATCC 51142 / BH68) (Cyanothece sp. (strain ATCC 51142)).